A 1391-amino-acid polypeptide reads, in one-letter code: DNA-directed RNA polymerase subunit beta' (1391 aa).

Positions 72, 74, 87, and 90 each coordinate Zn(2+). 3 residues coordinate Mg(2+): Asp462, Asp464, and Asp466. Zn(2+) is bound by residues Cys816, Cys890, Cys897, and Cys900.

This sequence belongs to the RNA polymerase beta' chain family. As to quaternary structure, the RNAP catalytic core consists of 2 alpha, 1 beta, 1 beta' and 1 omega subunit. When a sigma factor is associated with the core the holoenzyme is formed, which can initiate transcription. The cofactor is Mg(2+). It depends on Zn(2+) as a cofactor.

It carries out the reaction RNA(n) + a ribonucleoside 5'-triphosphate = RNA(n+1) + diphosphate. DNA-dependent RNA polymerase catalyzes the transcription of DNA into RNA using the four ribonucleoside triphosphates as substrates. The polypeptide is DNA-directed RNA polymerase subunit beta' (Neisseria gonorrhoeae (strain ATCC 700825 / FA 1090)).